The chain runs to 396 residues: Putative isochorismate synthase (396 aa).

Belongs to the isochorismate synthase family.

The enzyme catalyses chorismate = isochorismate. The protein operates within siderophore biosynthesis; amonabactin biosynthesis. Its function is as follows. Involved in the synthesis of amonabactin, a phenolate siderophore containing 2,3-dihydroxybenzoic acid (2,3-DHB). The chain is Putative isochorismate synthase (amoA) from Aeromonas hydrophila.